The sequence spans 153 residues: Putative pre-16S rRNA nuclease (153 aa).

It belongs to the YqgF nuclease family.

It is found in the cytoplasm. Functionally, could be a nuclease involved in processing of the 5'-end of pre-16S rRNA. This chain is Putative pre-16S rRNA nuclease, found in Prochlorococcus marinus (strain MIT 9215).